The primary structure comprises 108 residues: Tetrahydromethanopterin S-methyltransferase subunit B (108 aa).

A helical transmembrane segment spans residues 80 to 100 (AFYGIVVGLAFSGLLALIIFI).

Belongs to the MtrB family. As to quaternary structure, the complex is composed of 8 subunits; MtrA, MtrB, MtrC, MtrD, MtrE, MtrF, MtrG and MtrH.

It is found in the cell membrane. The enzyme catalyses 5-methyl-5,6,7,8-tetrahydromethanopterin + coenzyme M + 2 Na(+)(in) = 5,6,7,8-tetrahydromethanopterin + methyl-coenzyme M + 2 Na(+)(out). Its pathway is one-carbon metabolism; methanogenesis from CO(2); methyl-coenzyme M from 5,10-methylene-5,6,7,8-tetrahydromethanopterin: step 2/2. Functionally, part of a complex that catalyzes the formation of methyl-coenzyme M and tetrahydromethanopterin from coenzyme M and methyl-tetrahydromethanopterin. This is an energy-conserving, sodium-ion translocating step. The chain is Tetrahydromethanopterin S-methyltransferase subunit B from Methanosarcina acetivorans (strain ATCC 35395 / DSM 2834 / JCM 12185 / C2A).